The sequence spans 429 residues: Adenosylhomocysteinase (429 aa).

The substrate site is built by Thr64, Asp136, and Glu161. 162–164 is a binding site for NAD(+); sequence TTT. Residues Lys191 and Asp195 each coordinate substrate. NAD(+)-binding positions include Asn196, 225–230, Glu248, Asn283, 304–306, and Asn351; these read GYGWCG and SGH.

Belongs to the adenosylhomocysteinase family. NAD(+) is required as a cofactor.

It is found in the cytoplasm. It catalyses the reaction S-adenosyl-L-homocysteine + H2O = L-homocysteine + adenosine. It participates in amino-acid biosynthesis; L-homocysteine biosynthesis; L-homocysteine from S-adenosyl-L-homocysteine: step 1/1. In terms of biological role, may play a key role in the regulation of the intracellular concentration of adenosylhomocysteine. The protein is Adenosylhomocysteinase of Gloeothece citriformis (strain PCC 7424) (Cyanothece sp. (strain PCC 7424)).